The primary structure comprises 74 residues: UPF0352 protein MS1910 (74 aa).

It belongs to the UPF0352 family.

The sequence is that of UPF0352 protein MS1910 from Mannheimia succiniciproducens (strain KCTC 0769BP / MBEL55E).